The following is a 610-amino-acid chain: Elongation factor 4 (610 aa).

The region spanning 12 to 194 (EKIRNFSIIA…QIVEKVPAPQ (183 aa)) is the tr-type G domain. GTP is bound by residues 24–29 (DHGKST) and 141–144 (NKID).

The protein belongs to the TRAFAC class translation factor GTPase superfamily. Classic translation factor GTPase family. LepA subfamily.

Its subcellular location is the cell membrane. It carries out the reaction GTP + H2O = GDP + phosphate + H(+). Its function is as follows. Required for accurate and efficient protein synthesis under certain stress conditions. May act as a fidelity factor of the translation reaction, by catalyzing a one-codon backward translocation of tRNAs on improperly translocated ribosomes. Back-translocation proceeds from a post-translocation (POST) complex to a pre-translocation (PRE) complex, thus giving elongation factor G a second chance to translocate the tRNAs correctly. Binds to ribosomes in a GTP-dependent manner. The chain is Elongation factor 4 from Streptococcus thermophilus (strain ATCC BAA-250 / LMG 18311).